The following is a 344-amino-acid chain: MSNAITMGIFWHLIGAASAACFYAPFKQVKQWSWETMWSIGGIVSWLILPWTISALLLPDFWAYYSSFNLSTLLPVFLFGAMWGIGNINYGLTMRYLGMSMGIGIAIGITLIVGTLMTPIINGNFDVLINTEGGRMTLLGVLVALIGVGIVTRAGQLKERKMGITAEEFNLKKGLLLAVMCGIFSAGMSFAMNAAKPMHEAAAALGVDPLYVALPSYVVIMGGGALINLGFCFVRLAKVKNLSIKADFSLAKSMIITNILLSALGGLMWYLQFFFYAWGHARIPPQYDYISWMLHMSFYVLCGGIVGLVLKEWKNAGRRPVSVLSLGCVVIIIAANIVGMGMAS.

Transmembrane regions (helical) follow at residues 4–24 (AITM…CFYA), 38–58 (WSIG…ALLL), 68–88 (FNLS…IGNI), 101–121 (MGIG…TPII), 137–157 (TLLG…AGQL), 175–195 (LLLA…MNAA), 214–234 (LPSY…FCFV), 259–279 (ILLS…YAWG), 290–310 (ISWM…GLVL), and 323–343 (VLSL…MGMA).

This sequence belongs to the L-rhamnose transporter (TC 2.A.7.6) family.

The protein localises to the cell inner membrane. The enzyme catalyses L-rhamnopyranose(in) + H(+)(in) = L-rhamnopyranose(out) + H(+)(out). In terms of biological role, uptake of L-rhamnose across the cytoplasmic membrane with the concomitant transport of protons into the cell (symport system). This Citrobacter koseri (strain ATCC BAA-895 / CDC 4225-83 / SGSC4696) protein is L-rhamnose-proton symporter.